We begin with the raw amino-acid sequence, 299 residues long: MSSAAGPDPSEAPEERHFLRALELQPPLADMGRAELSSNATTSLVQRRKQAWGRQSWLEQIWNAGPVCQSTAEAAALERELLEDYRFGRQQLVELCGHASAVAVTKAFPLPALSRKQRTVLVVCGPEQNGAVGLVCARHLRVFEYEPTIFYPTRSLDLLHRDLTTQCEKMDIPFLSYLPTEVQLINEAYGLVVDAVLGPGVEPGEVGGPCTRALATLKLLSIPLVSLDIPSGWDAETGSDSEDGLRPDVLVSLAAPKRCAGRFSGRHHFVAGRFVPDDVRRKFALRLPGYTGTDCVAAL.

Residues Ala74–Leu287 form the YjeF N-terminal domain.

As to quaternary structure, interacts with APOA1. Binds to HDL. Expressed in theca cells in ovary and in Leydig cells in testis (at protein level). Also expressed in brain and mammary gland.

In terms of biological role, may accelerate cholesterol efflux from endothelial cells to high-density lipoprotein (HDL) and thereby regulates angiogenesis. May orchestrate hematopoietic stem and progenitor cell emergence from the hemogenic endothelium, a type of specialized endothelium manifesting hematopoietic potential. YJEFN3-mediated cholesterol efflux activates endothelial SREBF2, the master transcription factor for cholesterol biosynthesis, which in turn transactivates NOTCH and promotes hematopoietic stem and progenitor cell emergence. May play a role in spermiogenesis and oogenesis. This chain is YjeF N-terminal domain-containing protein 3 (YJEFN3), found in Homo sapiens (Human).